An 86-amino-acid polypeptide reads, in one-letter code: Small ribosomal subunit protein uS15 (86 aa).

The protein belongs to the universal ribosomal protein uS15 family. Part of the 30S ribosomal subunit. Forms a bridge to the 50S subunit in the 70S ribosome, contacting the 23S rRNA.

Functionally, one of the primary rRNA binding proteins, it binds directly to 16S rRNA where it helps nucleate assembly of the platform of the 30S subunit by binding and bridging several RNA helices of the 16S rRNA. Forms an intersubunit bridge (bridge B4) with the 23S rRNA of the 50S subunit in the ribosome. The protein is Small ribosomal subunit protein uS15 of Ruthia magnifica subsp. Calyptogena magnifica.